The chain runs to 752 residues: Cytosolic phospholipase A2 (752 aa).

The phospholipid binding stretch occupies residues 1–178 (MSFIDPYQHI…MKKLLGPKKS (178 aa)). Ser-2 is subject to Phosphoserine. The region spanning 6 to 122 (PYQHIIVEHQ…KVGEKKEVPF (117 aa)) is the C2 domain. Asp-40, Thr-41, Asp-43, Asn-65, Asp-93, Ala-94, and Asn-95 together coordinate Ca(2+). Residues 140-740 (SCPDLRFSMA…SNVEARKFFN (601 aa)) form the PLA2c domain. Ser-228 acts as the Nucleophile in catalysis. Thr-268 is subject to Phosphothreonine. The segment at 427 to 457 (KHIVSNDSSDSDDEAQGPKGTENEDAEREYQ) is disordered. 3 positions are modified to phosphoserine: Ser-434, Ser-435, and Ser-437. Ser-505 carries the phosphoserine; by MAPK modification. Ser-511 and Ser-515 each carry phosphoserine. Lys-541 participates in a covalent cross-link: Glycyl lysine isopeptide (Lys-Gly) (interchain with G-Cter in SUMO2). Catalysis depends on Asp-549, which acts as the Proton acceptor. A Glycyl lysine isopeptide (Lys-Gly) (interchain with G-Cter in SUMO2) cross-link involves residue Lys-606. Ser-727 and Ser-729 each carry phosphoserine.

Interacts with KAT5. In terms of processing, phosphorylated at both Ser-505 and Ser-727 in response to mitogenic stimuli. As to expression, in brain tissue, expressed in low levels in olfactory mitral and granule cells, in hippocampal pyramidal cells and in dentate and cerebellar granule cells.

It localises to the cytoplasm. Its subcellular location is the golgi apparatus membrane. The protein localises to the nucleus envelope. The enzyme catalyses a 1,2-diacyl-sn-glycero-3-phosphocholine + H2O = a 1-acyl-sn-glycero-3-phosphocholine + a fatty acid + H(+). It catalyses the reaction a 1-O-alkyl-2-acyl-sn-glycero-3-phosphocholine + H2O = a 1-O-alkyl-sn-glycero-3-phosphocholine + a fatty acid + H(+). The catalysed reaction is a 1-acyl-sn-glycero-3-phosphocholine + H2O = sn-glycerol 3-phosphocholine + a fatty acid + H(+). It carries out the reaction 1-hexadecanoyl-2-(5Z,8Z,11Z,14Z-eicosatetraenoyl)-sn-glycero-3-phosphocholine + H2O = 1-hexadecanoyl-sn-glycero-3-phosphocholine + (5Z,8Z,11Z,14Z)-eicosatetraenoate + H(+). The enzyme catalyses 1,2-di-(5Z,8Z,11Z,14Z-eicosatetraenoyl)-sn-glycero-3-phosphocholine + H2O = 1-(5Z,8Z,11Z,14Z-eicosatetraenoyl)-sn-glycero-3-phosphocholine + (5Z,8Z,11Z,14Z)-eicosatetraenoate + H(+). It catalyses the reaction 1-octadecanoyl-2-(5Z,8Z,11Z,14Z-eicosatetraenoyl)-sn-glycero-3-phosphocholine + H2O = 1-octadecanoyl-sn-glycero-3-phosphocholine + (5Z,8Z,11Z,14Z)-eicosatetraenoate + H(+). The catalysed reaction is 1-hexadecanoyl-2-(9Z,12Z-octadecadienoyl)-sn-glycero-3-phosphocholine + H2O = (9Z,12Z)-octadecadienoate + 1-hexadecanoyl-sn-glycero-3-phosphocholine + H(+). It carries out the reaction 1-octadecanoyl-2-(9Z,12Z,15Z-octadecatrienoyl)-sn-glycero-3-phosphocholine + H2O = (9Z,12Z,15Z)-octadecatrienoate + 1-octadecanoyl-sn-glycero-3-phosphocholine + H(+). The enzyme catalyses 1-(5Z,8Z,11Z,14Z-eicosatetraenoyl)-2-hexadecanoyl-sn-glycero-3-phosphocholine + H2O = 1-(5Z,8Z,11Z,14Z-eicosatetraenoyl)-sn-glycero-3-phosphocholine + hexadecanoate + H(+). It catalyses the reaction 1-O-hexadecyl-2-(5Z,8Z,11Z,14Z)-eicosatetraenoyl-sn-glycero-3-phosphocholine + H2O = 1-O-hexadecyl-sn-glycero-3-phosphocholine + (5Z,8Z,11Z,14Z)-eicosatetraenoate + H(+). The catalysed reaction is 1,2-di-(9Z-octadecenoyl)-sn-glycero-3-phospho-(1'-sn-glycerol) + H2O = 1-(9Z-octadecenoyl)-sn-glycero-3-phospho-(1'-sn-glycerol) + (9Z)-octadecenoate + H(+). It carries out the reaction 1-octadecanoyl-2-(5Z,8Z,11Z,14Z-eicosatetraenoyl)-sn-glycero-3-phosphate + H2O = 1-octadecanoyl-sn-glycero-3-phosphate + (5Z,8Z,11Z,14Z)-eicosatetraenoate + H(+). The enzyme catalyses 1-hexadecanoyl-sn-glycero-3-phosphocholine + H2O = sn-glycerol 3-phosphocholine + hexadecanoate + H(+). It catalyses the reaction 2-(prostaglandin E2)-sn-glycero-3-phosphoethanolamine + H2O = sn-glycero-3-phosphoethanolamine + prostaglandin E2 + H(+). The catalysed reaction is 2-[(15S)-hydroxy-(5Z,8Z,11Z,13E)-eicosatetraenoyl]-sn-glycero-3-phosphocholine + H2O = (15S)-hydroxy-(5Z,8Z,11Z,13E)-eicosatetraenoate + sn-glycerol 3-phosphocholine + H(+). It carries out the reaction 2-[(15R)-hydroxy-(5Z,8Z,11Z,13E)-eicosatetraenoyl]-sn-glycero-3-phosphocholine + H2O = (15R)-hydroxy-(5Z,8Z,11Z,13E)-eicosatetraenoate + sn-glycerol 3-phosphocholine + H(+). The enzyme catalyses 2-(prostaglandin E2)-sn-glycero-3-phosphocholine + H2O = prostaglandin E2 + sn-glycerol 3-phosphocholine + H(+). It catalyses the reaction 2-[(11R)-hydroxy-(5Z,8Z,12E,14Z)-eicosatetraenoyl]-sn-glycero-3-phosphocholine + H2O = (11R)-hydroxy-(5Z,8Z,12E,14Z)-eicosatetraenoate + sn-glycerol 3-phosphocholine + H(+). The catalysed reaction is 1-(5Z,8Z,11Z,14Z-eicosatetraenoyl)-2-O-hexadecyl-sn-glycero-3-phosphocholine + H2O = 2-O-hexadecyl-sn-glycero-3-phosphocholine + (5Z,8Z,11Z,14Z)-eicosatetraenoate + H(+). It carries out the reaction 1-octadecanoyl-2-(5Z,8Z,11Z,14Z-eicosatetraenoyl)-sn-glycero-3-phosphocholine + glycerol = 1-(5Z,8Z,11Z,14Z-eicosatetraenoyl)-glycerol + 1-octadecanoyl-sn-glycero-3-phosphocholine. The enzyme catalyses 1-octadecanoyl-2-(9Z,12Z,15Z-octadecatrienoyl)-sn-glycero-3-phosphocholine + glycerol = 1-(9Z,12Z,15Z-octadecatrienoyl)-glycerol + 1-octadecanoyl-sn-glycero-3-phosphocholine. It participates in lipid metabolism; arachidonate metabolism. The protein operates within membrane lipid metabolism; glycerophospholipid metabolism. It functions in the pathway lipid metabolism; prostaglandin biosynthesis. Its pathway is lipid metabolism; leukotriene B4 biosynthesis. With respect to regulation, activated by cytosolic calcium, which is necessary for binding to membrane lipids. Activated by phosphorylation in response to mitogenic stimuli. Its function is as follows. Has primarily calcium-dependent phospholipase and lysophospholipase activities, with a major role in membrane lipid remodeling and biosynthesis of lipid mediators of the inflammatory response. Plays an important role in embryo implantation and parturition through its ability to trigger prostanoid production. Preferentially hydrolyzes the ester bond of the fatty acyl group attached at sn-2 position of phospholipids (phospholipase A2 activity). Selectively hydrolyzes sn-2 arachidonoyl group from membrane phospholipids, providing the precursor for eicosanoid biosynthesis via the cyclooxygenase pathway. In an alternative pathway of eicosanoid biosynthesis, hydrolyzes sn-2 fatty acyl chain of eicosanoid lysophopholipids to release free bioactive eicosanoids. Hydrolyzes the ester bond of the fatty acyl group attached at sn-1 position of phospholipids (phospholipase A1 activity) only if an ether linkage rather than an ester linkage is present at the sn-2 position. This hydrolysis is not stereospecific. Has calcium-independent phospholipase A2 and lysophospholipase activities in the presence of phosphoinositides. Has O-acyltransferase activity. Catalyzes the transfer of fatty acyl chains from phospholipids to a primary hydroxyl group of glycerol (sn-1 or sn-3), potentially contributing to monoacylglycerol synthesis. This chain is Cytosolic phospholipase A2 (Pla2g4a), found in Rattus norvegicus (Rat).